A 442-amino-acid polypeptide reads, in one-letter code: Methionine aminopeptidase 2-1 (442 aa).

A disordered region spans residues 1-92 (MAAQASEELE…ISELFPNNQY (92 aa)). The span at 15 to 25 (NGQNGHAQEQV) shows a compositional bias: polar residues. Residues 30 to 47 (EAADNDDSEDDEKEEEGG) are compositionally biased toward acidic residues. Residues 56–72 (AKKKKKRKPKKKKKGGA) show a composition bias toward basic residues. H195 lines the substrate pocket. D215, D226, and H295 together coordinate a divalent metal cation. Residue H303 participates in substrate binding. Residues E328 and E423 each coordinate a divalent metal cation.

The protein belongs to the peptidase M24A family. Methionine aminopeptidase eukaryotic type 2 subfamily. The cofactor is Co(2+). Requires Zn(2+) as cofactor. Mn(2+) serves as cofactor. It depends on Fe(2+) as a cofactor.

Its subcellular location is the cytoplasm. The enzyme catalyses Release of N-terminal amino acids, preferentially methionine, from peptides and arylamides.. Cotranslationally removes the N-terminal methionine from nascent proteins. The N-terminal methionine is often cleaved when the second residue in the primary sequence is small and uncharged (Met-Ala-, Cys, Gly, Pro, Ser, Thr, or Val). In Talaromyces marneffei (strain ATCC 18224 / CBS 334.59 / QM 7333) (Penicillium marneffei), this protein is Methionine aminopeptidase 2-1.